A 37-amino-acid chain; its full sequence is Large ribosomal subunit protein bL36A (37 aa).

Belongs to the bacterial ribosomal protein bL36 family.

This Haemophilus ducreyi (strain 35000HP / ATCC 700724) protein is Large ribosomal subunit protein bL36A.